The following is a 235-amino-acid chain: Orotidine 5'-phosphate decarboxylase (235 aa).

Substrate contacts are provided by residues aspartate 10, lysine 33, 60–69, threonine 123, arginine 185, glutamine 194, glycine 214, and arginine 215; that span reads DLKMSDIPNT. Lysine 62 (proton donor) is an active-site residue.

It belongs to the OMP decarboxylase family. Type 1 subfamily. Homodimer.

It catalyses the reaction orotidine 5'-phosphate + H(+) = UMP + CO2. Its pathway is pyrimidine metabolism; UMP biosynthesis via de novo pathway; UMP from orotate: step 2/2. Functionally, catalyzes the decarboxylation of orotidine 5'-monophosphate (OMP) to uridine 5'-monophosphate (UMP). The protein is Orotidine 5'-phosphate decarboxylase of Lactobacillus gasseri (strain ATCC 33323 / DSM 20243 / BCRC 14619 / CIP 102991 / JCM 1131 / KCTC 3163 / NCIMB 11718 / NCTC 13722 / AM63).